The chain runs to 120 residues: Protein FAM241B (120 aa).

Residues 12-59 (QDDDPRVRTTTQHRSSSSQQGFFNRGHGAPPGGPGPRQQQAGARLGAA) are disordered. Composition is skewed to low complexity over residues 19–39 (RTTT…RGHG) and 47–59 (PRQQ…LGAA). Ser-61 carries the phosphoserine modification. A helical membrane pass occupies residues 91-111 (ILLLFLLMMLGVRGLLLVGLV).

Belongs to the FAM241 family.

Its subcellular location is the membrane. Its function is as follows. May play a role in lysosome homeostasis. The protein is Protein FAM241B of Mus musculus (Mouse).